The primary structure comprises 501 residues: TNF receptor-associated factor 2 (501 aa).

At alanine 2 the chain carries N-acetylalanine. Phosphoserine is present on serine 5. Threonine 7 bears the Phosphothreonine mark. At serine 11 the chain carries Phosphoserine. At threonine 22 the chain carries Phosphothreonine. Residue lysine 31 forms a Glycyl lysine isopeptide (Lys-Gly) (interchain with G-Cter in ubiquitin) linkage. Residues 34-73 (CSACKNILRRPFQAQCGHRYCSFCLTSILSSGPQNCAACV) form an RING-type zinc finger. A Phosphothreonine; by PKC modification is found at threonine 117. TRAF-type zinc fingers lie at residues 124-180 (CHEG…VHYE) and 177-233 (VHYE…ENLQ). An important for interaction with BIRC2 and BIRC3 region spans residues 283-293 (ENIVCVLNREV). A coiled-coil region spans residues 298-348 (VTAEACSRQHRLDQDKIEALSNKVQQLERSIGLKDLAMADLEQKVSELEVS). Lysine 320 participates in a covalent cross-link: Glycyl lysine isopeptide (Lys-Gly) (interchain with G-Cter in ubiquitin). Residues 351 to 496 (DGVFIWKISD…DDAIFIKAIV (146 aa)) form the MATH domain.

The protein belongs to the TNF receptor-associated factor family. A subfamily. In terms of assembly, homotrimer. Heterotrimer with TRAF1. Heterotrimer with TRAF3 (via TRAF domain). The domain containing the RING-type and the first TRAF-type zinc finger can also form homodimers (in vitro). Interacts with TNFRSF1B/TNFR2. Interacts with TNFRSF5/CD40. Interacts with TNFRSF4, TNFRSF7/CD27, TNFRSF8/CD30, TNFRSF9/CD137, TNFRSF11A/RANK, TNFRSF13B/TACI, TNFRSF14, TNFRSF16/NGFR, TNFRSF17/BCMA, TNFRSF18/AITR, TNFRSF19/TROY, TNFRSF19L/RELT and EDAR. Stimulation of TNF-alpha receptor TNFRSF1A leads to the formation of two distinct signaling complexes. Plasma membrane-bound complex I is composed of TNFRSF1A, TRADD, RIPK1, TRAF2 and BIRC2/c-IAP1 or BIRC3 which interacts with CHUCK/IKK-alpha, IKBKB/IKK-beta and IKBKG/IKK-gamma promoting cell survival. Subsequently, TRADD, RIPK1 and TRAF2 dissociate from TNFRSF1A and form cytoplasmic complex II with FADD and caspase CASP8 promoting cell apoptosis. Interacts with TRADD. Identified in a complex with TNFRSF1A, RIPK1 and IKBKB/IKK-beta. Interacts with RIPK2. Interacts with BIRC2 and BIRC3 N-terminus; a single BIRC2 or BIRC3 molecule interacts with a heterotrimer formed by TRAF1 and TRAF2, or a TRAF2 homotrimer. Identified in a complex composed of TRAF2, TRAF3, BIRC2 and BIRC3. Interacts with BIRC2; the interaction promotes BIRC2 stability. Interaction with BIRC2 and/or BIRC3 is essential for ubiquitination of IKBKE, degradation of NFKBIA and activation of NF-kappa-B. Within complex I, phosphorylated TRAF2 interacts (via 'Lys-63'-linked polyubiquitin chains) with CHUCK/IKK-alpha, IKBKB/IKK-beta, IKBKG/IKK-gamma TAB2, TAB3 and TAK1 in response to TNF-alpha stimulation. Within complex I, interacts with UXT isoform 1 (via TPQE motif); the interaction prevents the recruitment of FADD and CASP8/caspase 8 to complex I. Forms a complex composed of TNFRSF8/CD30 or TNFRSF1B/TNFR2, and TRAF1, TRAF2 and E3 ligase TRAIP. Within the complex, interacts with TRAIP; the interaction inhibits TRAF2-mediated NF-kappa B activation. Component of a complex composed of TANK and TBK1. Interacts with TRPC4AP. Interacts with MAP3K1/MEKK1, MAP3K5/ASK1 and MAP3K11/MLK3 in response to TNF-alpha stimulation; the interaction leads to JNK activation and interaction with MAP3K5 is inhibited by PRMT1. Component of a complex composed of MAP3K14/NIK BIRC3 and TRAF3; the interaction leads to BIRC2/3-mediated ubiquitination of TRAF3 upon CD40 engagement in a TRAF2-dependent manner. Interacts with MAP3K14/NIK in response to TNF-alpha stimulation; the interaction leads to NF-kappa B activation. Interacts with PEG3; the interaction may promote TRAF2-mediated NF-kappa B activation. Interacts with HIVEP3; the interaction may inhibit TNF-alpha-TRAF2-mediated NF-kappa B and JNK activation. Interacts with TANK/ITRAF; the interaction prevents interaction between TNFRSF1B/TNFR2 and TRAF2. Interacts with deubiquitinating enzyme CYLD; the interaction results in the deubiquitination and inactivation of TRAF2. Interacts with SIAH2; the interaction leads to TRAF2 ubiquitination and degradation. Interacts with E2 conjugating enzyme UBE2N/Ubc13, E3 ligase ITCH and RNF11 in response to TNF-alpha stimulation. Interacts with ubiquitin-editing enzyme TNFAIP3/A20 in response to TNF-alpha stimulation; the interaction promotes TRAF2 dissociation from UBE2N/Ubc13, ITCH, RNF11 and TAX1BP1 and prevents prolonged TRAF-2 ubiquitination. Interacts with TAX1BP1 in response to TNF-alpha stimulation; the interaction promotes TRAF2 dissociation from UBE2N/Ubc13 and TNFAIP3/A20, and prevents prolonged TRAF-2 ubiquitination. Interacts (via C-terminus) with EIF2AK2/PKR (via the kinase catalytic domain). Interacts with deubiquitinating enzyme USP48. Interacts with PTPN2; probably involved in TNF-mediated signaling. Interacts with Toll-like receptor TLR4/3 adapter TICAM1/TRIF; the interaction may promote TICAM1 ubiquitination. Interacts with kinase/endoribonuclease ERN1/IRE1 and DAB2IP in response to ER stress; the interaction requires DAB2IP. Interacts with ERN1/IRE1 and TAOK3 in response to ER stress; the interaction may promote TRAF2 phosphorylation. Interacts (via zinc fingers) with DAB2IP (via C-terminus PER domain) in response to TNF-alpha stimulation. Interacts with CASP8AP2/FLASH. Interacts with NFATC2IP; the interaction may repress IL-4 production in T cells. Interacts with kinase CDK9. Interacts with sphingosine kinase 1 SPHK1. Interacts with kinase TNIK. Interacts with TRAFD1. Interacts with DNA phosphodiesterase TDP2. Interacts with MAVS/IPS1. Interacts with CARD14. Interacts with GPS2. Interacts with XPNPEP3. Interacts with RIPK3. Interacts with RELL2. Interacts with LRRC19. Interacts with GAPDH; promoting TRAF2 ubiquitination. Post-translationally, phosphorylated at several serine residues within the first 128 amino acid residues. Phosphorylated at Thr-117 in response to signaling via TNF and TNFRSF1A. Phosphorylation at Thr-117 is required for 'Lys-63'-linked polyubiquitination, but not for 'Lys-48'-linked polyubiquitination. Phosphorylation at Thr-117 is important for interaction with IKKA and IKKB, activation of IKK and subsequent activation of NF-kappa-B. Undergoes both 'Lys-48'-linked and 'Lys-63'-linked polyubiquitination. Polyubiquitinated via 'Lys-63'-linked ubiquitin in response to TNF signaling; this requires prior phosphorylation at Thr-117. 'Lys-63'-linked polyubiquitination promotes TRAF2-mediated activation of NF-kappa-B. Can be polyubiquitinated at several Lys residues via 'Lys-48'-linked ubiquitin chains in response to TNF signaling, leading to proteasomal degradation. Autoubiquitinated, leading to its subsequent proteasomal degradation. Polyubiquitinated by BIRC2 and SIAH2, leading to its subsequent proteasomal degradation. Not ubiquitinated by BIRC3 or SIAH1. Deubiquitinated by CYLD, a protease that specifically cleaves 'Lys-63'-linked polyubiquitin chains. Ubiquination is inhibited by LRRC19; inhiits proteasomal degradation. Ubiquitinated at Lys-320 by the SCF(FBXL2) complex, leading to its degradation by the proteasome. Ubiquitinated by E3 ubiquitin-protein ligase complex containing FBXO7; leading to repression of NF-kappa-B signaling. In terms of tissue distribution, isoform 1 and isoform 2 are expressed in spleen, adipose tissues, skeletal muscles, thymus, testis, heart, lung, brain. Isoform 2 is very weakly expressed in heart, lung and brain.

The protein localises to the cytoplasm. The catalysed reaction is S-ubiquitinyl-[E2 ubiquitin-conjugating enzyme]-L-cysteine + [acceptor protein]-L-lysine = [E2 ubiquitin-conjugating enzyme]-L-cysteine + N(6)-ubiquitinyl-[acceptor protein]-L-lysine.. It functions in the pathway protein modification; protein ubiquitination. Has very low E3 ubiquitin ligase activity in the absence of sphingosine-1-phosphate. E3 ubiquitin ligase activity is strongly activated by cytoplasmic sphingosine-1-phosphate. Functionally, E3 ubiquitin-protein ligase that regulates activation of NF-kappa-B and JNK and plays a central role in the regulation of cell survival and apoptosis. Catalyzes 'Lys-63'-linked ubiquitination of target proteins, such as BIRC3, IKBKE, MLST8, RIPK1 and TICAM1. Is an essential constituent of several E3 ubiquitin-protein ligase complexes, where it promotes the ubiquitination of target proteins by bringing them into contact with other E3 ubiquitin ligases. Regulates BIRC2 and BIRC3 protein levels by inhibiting their autoubiquitination and subsequent degradation; this does not depend on the TRAF2 RING-type zinc finger domain. Plays a role in mediating activation of NF-kappa-B by EIF2AK2/PKR. In complex with BIRC2 or BIRC3, promotes ubiquitination of IKBKE. Acts as a regulator of mTORC1 and mTORC2 assembly by mediating 'Lys-63'-linked ubiquitination of MLST8, thereby inhibiting formation of the mTORC2 complex, while facilitating assembly of the mTORC1 complex. Required for normal antibody isotype switching from IgM to IgG. The sequence is that of TNF receptor-associated factor 2 (Traf2) from Mus musculus (Mouse).